The sequence spans 66 residues: MAKSKGVRIIVTLECTECRTATAAEKRSPGVSRYTTTKNRRNNLERLELMKFCPQLNRMTLHREIK.

This sequence belongs to the bacterial ribosomal protein bL33 family.

This Synechococcus sp. (strain CC9605) protein is Large ribosomal subunit protein bL33B.